Consider the following 147-residue polypeptide: Hemoglobin subunit gamma (147 aa).

The 145-residue stretch at 3–147 folds into the Globin domain; that stretch reads HFTAEEKAII…VATALAHKYH (145 aa). Heme b contacts are provided by H64 and H93.

Belongs to the globin family. In terms of assembly, heterotetramer of two alpha chains and two gamma chains in fetal hemoglobin (Hb F). Red blood cells.

Its function is as follows. Gamma chains make up the fetal hemoglobin F, in combination with alpha chains. The chain is Hemoglobin subunit gamma (HBG) from Otolemur crassicaudatus (Brown greater galago).